Consider the following 113-residue polypeptide: Probable 4-amino-4-deoxy-L-arabinose-phosphoundecaprenol flippase subunit ArnE (113 aa).

A run of 3 helical transmembrane segments spans residues 39–59 (IFWL…WLRL), 62–82 (ILPL…VTLI), and 91–111 (VNVK…LMSM). The EamA domain occupies 42–111 (LITAIAMLGF…IMLGIVLMSM (70 aa)).

It belongs to the ArnE family. In terms of assembly, heterodimer of ArnE and ArnF.

It localises to the cell inner membrane. It participates in bacterial outer membrane biogenesis; lipopolysaccharide biosynthesis. Functionally, translocates 4-amino-4-deoxy-L-arabinose-phosphoundecaprenol (alpha-L-Ara4N-phosphoundecaprenol) from the cytoplasmic to the periplasmic side of the inner membrane. The polypeptide is Probable 4-amino-4-deoxy-L-arabinose-phosphoundecaprenol flippase subunit ArnE (Proteus mirabilis (strain HI4320)).